Consider the following 421-residue polypeptide: Gamma-glutamyl phosphate reductase (421 aa).

This sequence belongs to the gamma-glutamyl phosphate reductase family.

It is found in the cytoplasm. It carries out the reaction L-glutamate 5-semialdehyde + phosphate + NADP(+) = L-glutamyl 5-phosphate + NADPH + H(+). It participates in amino-acid biosynthesis; L-proline biosynthesis; L-glutamate 5-semialdehyde from L-glutamate: step 2/2. Its function is as follows. Catalyzes the NADPH-dependent reduction of L-glutamate 5-phosphate into L-glutamate 5-semialdehyde and phosphate. The product spontaneously undergoes cyclization to form 1-pyrroline-5-carboxylate. In Bordetella petrii (strain ATCC BAA-461 / DSM 12804 / CCUG 43448), this protein is Gamma-glutamyl phosphate reductase.